The chain runs to 404 residues: Arginine biosynthesis bifunctional protein ArgJ (404 aa).

Positions 166, 189, 200, 280, 399, and 404 each coordinate substrate. The Nucleophile role is filled by T200.

Belongs to the ArgJ family. Heterotetramer of two alpha and two beta chains.

The protein localises to the cytoplasm. The enzyme catalyses N(2)-acetyl-L-ornithine + L-glutamate = N-acetyl-L-glutamate + L-ornithine. The catalysed reaction is L-glutamate + acetyl-CoA = N-acetyl-L-glutamate + CoA + H(+). Its pathway is amino-acid biosynthesis; L-arginine biosynthesis; L-ornithine and N-acetyl-L-glutamate from L-glutamate and N(2)-acetyl-L-ornithine (cyclic): step 1/1. It functions in the pathway amino-acid biosynthesis; L-arginine biosynthesis; N(2)-acetyl-L-ornithine from L-glutamate: step 1/4. In terms of biological role, catalyzes two activities which are involved in the cyclic version of arginine biosynthesis: the synthesis of N-acetylglutamate from glutamate and acetyl-CoA as the acetyl donor, and of ornithine by transacetylation between N(2)-acetylornithine and glutamate. The chain is Arginine biosynthesis bifunctional protein ArgJ from Mycobacterium bovis (strain ATCC BAA-935 / AF2122/97).